The sequence spans 366 residues: Ribosomal RNA large subunit methyltransferase M (366 aa).

S-adenosyl-L-methionine is bound by residues Ser-188, 221 to 224 (CPGG), Asp-240, Asp-260, and Asp-277. Catalysis depends on Lys-306, which acts as the Proton acceptor.

Belongs to the class I-like SAM-binding methyltransferase superfamily. RNA methyltransferase RlmE family. RlmM subfamily. In terms of assembly, monomer.

It is found in the cytoplasm. The enzyme catalyses cytidine(2498) in 23S rRNA + S-adenosyl-L-methionine = 2'-O-methylcytidine(2498) in 23S rRNA + S-adenosyl-L-homocysteine + H(+). Its function is as follows. Catalyzes the 2'-O-methylation at nucleotide C2498 in 23S rRNA. This is Ribosomal RNA large subunit methyltransferase M from Klebsiella pneumoniae subsp. pneumoniae (strain ATCC 700721 / MGH 78578).